Consider the following 201-residue polypeptide: 3-isopropylmalate dehydratase small subunit (201 aa).

The protein belongs to the LeuD family. LeuD type 1 subfamily. As to quaternary structure, heterodimer of LeuC and LeuD.

The catalysed reaction is (2R,3S)-3-isopropylmalate = (2S)-2-isopropylmalate. Its pathway is amino-acid biosynthesis; L-leucine biosynthesis; L-leucine from 3-methyl-2-oxobutanoate: step 2/4. Catalyzes the isomerization between 2-isopropylmalate and 3-isopropylmalate, via the formation of 2-isopropylmaleate. In Roseobacter denitrificans (strain ATCC 33942 / OCh 114) (Erythrobacter sp. (strain OCh 114)), this protein is 3-isopropylmalate dehydratase small subunit.